A 1071-amino-acid polypeptide reads, in one-letter code: Kinesin-like protein KIN-14J (1071 aa).

Residues 39 to 142 form the Calponin-homology (CH) domain; that stretch reads KKGHQSLVEW…SLKALKASFS (104 aa). The segment at 157–181 is disordered; that stretch reads WSLPEDHSDSRGDDRNFTDGFQSKE. Residues 158 to 173 show a composition bias toward basic and acidic residues; it reads SLPEDHSDSRGDDRNF. The stretch at 299–389 forms a coiled coil; it reads EKTRIEEKER…ELEKLCQSKS (91 aa). One can recognise a Kinesin motor domain in the interval 472–800; that stretch reads NIRVYCRIRP…LKFAERVSGV (329 aa). 556–563 lines the ATP pocket; the sequence is GQTGSGKT. A coiled-coil region spans residues 811 to 844; it reads GRDVRQLMEQVSNLKDVIAKKDEELQNFQKVKGN. Disordered regions lie at residues 852–931 and 995–1071; these read GLSN…AAKG and ARMT…NRRR. Basic and acidic residues-rich tracts occupy residues 910 to 921 and 995 to 1017; these read SDERKHQKDYHQ and ARMT…KDRT. The segment covering 1034–1049 has biased composition (polar residues); it reads TRPSRLSIATSSSSKA.

This sequence belongs to the TRAFAC class myosin-kinesin ATPase superfamily. Kinesin family. KIN-14 subfamily.

The sequence is that of Kinesin-like protein KIN-14J from Arabidopsis thaliana (Mouse-ear cress).